The primary structure comprises 642 residues: Threonine--tRNA ligase (642 aa).

Positions 1-61 (MPVVTLPDGS…DSDANLAIIT (61 aa)) constitute a TGS domain. The catalytic stretch occupies residues 243 to 534 (DHRKIGKQLD…LTEEYAGFFP (292 aa)). Residues C334, H385, and H511 each contribute to the Zn(2+) site.

The protein belongs to the class-II aminoacyl-tRNA synthetase family. Homodimer. Requires Zn(2+) as cofactor.

It localises to the cytoplasm. It carries out the reaction tRNA(Thr) + L-threonine + ATP = L-threonyl-tRNA(Thr) + AMP + diphosphate + H(+). Functionally, catalyzes the attachment of threonine to tRNA(Thr) in a two-step reaction: L-threonine is first activated by ATP to form Thr-AMP and then transferred to the acceptor end of tRNA(Thr). Also edits incorrectly charged L-seryl-tRNA(Thr). This Photorhabdus laumondii subsp. laumondii (strain DSM 15139 / CIP 105565 / TT01) (Photorhabdus luminescens subsp. laumondii) protein is Threonine--tRNA ligase.